The primary structure comprises 309 residues: Protein FdhE (309 aa).

Belongs to the FdhE family.

It is found in the cytoplasm. Necessary for formate dehydrogenase activity. The chain is Protein FdhE from Salmonella choleraesuis (strain SC-B67).